The chain runs to 348 residues: Phosphate acyltransferase (348 aa).

It belongs to the PlsX family. In terms of assembly, homodimer. Probably interacts with PlsY.

It localises to the cytoplasm. The catalysed reaction is a fatty acyl-[ACP] + phosphate = an acyl phosphate + holo-[ACP]. It participates in lipid metabolism; phospholipid metabolism. In terms of biological role, catalyzes the reversible formation of acyl-phosphate (acyl-PO(4)) from acyl-[acyl-carrier-protein] (acyl-ACP). This enzyme utilizes acyl-ACP as fatty acyl donor, but not acyl-CoA. The protein is Phosphate acyltransferase of Synechocystis sp. (strain ATCC 27184 / PCC 6803 / Kazusa).